The sequence spans 487 residues: GTPase Der (487 aa).

2 consecutive EngA-type G domains span residues 3-167 (FTLA…EGFA) and 203-378 (LQIA…DIWN). Residues 9 to 16 (GRPNVGKS), 56 to 60 (DTAGL), 119 to 122 (NKAE), 209 to 216 (GRPNAGKS), 256 to 260 (DTAGM), and 321 to 324 (NKWD) contribute to the GTP site. The KH-like domain maps to 379 to 463 (RRITTARLNS…PIRLTMRGQG (85 aa)). The segment at 459–487 (MRGQGDKNPFKERKFRTPSRLRKHLGKKG) is disordered. Positions 471-487 (RKFRTPSRLRKHLGKKG) are enriched in basic residues.

It belongs to the TRAFAC class TrmE-Era-EngA-EngB-Septin-like GTPase superfamily. EngA (Der) GTPase family. In terms of assembly, associates with the 50S ribosomal subunit.

In terms of biological role, GTPase that plays an essential role in the late steps of ribosome biogenesis. The chain is GTPase Der from Cereibacter sphaeroides (strain ATCC 17025 / ATH 2.4.3) (Rhodobacter sphaeroides).